The sequence spans 202 residues: Ribosome maturation factor RimP (202 aa).

The protein belongs to the RimP family.

The protein resides in the cytoplasm. Required for maturation of 30S ribosomal subunits. In Polaromonas naphthalenivorans (strain CJ2), this protein is Ribosome maturation factor RimP.